Here is a 162-residue protein sequence, read N- to C-terminus: Phospholipase A2 (162 aa).

An N-terminal signal peptide occupies residues 1–22 (MKVLQMFFCVILLCVTSVLVEA). A propeptide spanning residues 23 to 35 (KSTTKGDETASKR) is cleaved from the precursor. 6 cysteine pairs are disulfide-bonded: cysteine 60-cysteine 155, cysteine 62-cysteine 78, cysteine 77-cysteine 134, cysteine 84-cysteine 127, cysteine 94-cysteine 120, and cysteine 113-cysteine 125. Residues tyrosine 61, glycine 63, and glycine 65 each coordinate Ca(2+). Histidine 81 is an active-site residue. Aspartate 82 is a binding site for Ca(2+). The active site involves aspartate 128.

The protein belongs to the phospholipase A2 family. Group I subfamily. D49 sub-subfamily. It depends on Ca(2+) as a cofactor. In terms of tissue distribution, expressed both outside and in acontia, a specialised envenomation structure laden with batteries of venom-containing nematocysts found only in the superfamily Metridioidea.

It is found in the secreted. The protein localises to the nematocyst. The enzyme catalyses a 1,2-diacyl-sn-glycero-3-phosphocholine + H2O = a 1-acyl-sn-glycero-3-phosphocholine + a fatty acid + H(+). In terms of biological role, PLA2 catalyzes the calcium-dependent hydrolysis of the 2-acyl groups in 3-sn-phosphoglycerides. The polypeptide is Phospholipase A2 (Calliactis polypus (Hermit crab anemone)).